The chain runs to 121 residues: MIYPQTMLTVADNTGAKKIMCIRVLGGNRKYGKIGDTIIGVVKEAIPNMPIKKSDVVRAIIVRTSKTIRRADGMYIRFDDNAAVIVNMENNPRGTRVFGPVAREIRDKNFSKIVSLAPEVL.

This sequence belongs to the universal ribosomal protein uL14 family. As to quaternary structure, part of the 50S ribosomal subunit.

Its subcellular location is the plastid. The protein resides in the chloroplast. In terms of biological role, binds to 23S rRNA. The sequence is that of Large ribosomal subunit protein uL14c from Thalassiosira pseudonana (Marine diatom).